An 82-amino-acid polypeptide reads, in one-letter code: Turripeptide IX-07 (82 aa).

The first 21 residues, 1-21, serve as a signal peptide directing secretion; that stretch reads MGFYMLLTVALLLTSLMNVEA. Positions 22-39 are excised as a propeptide; it reads TPVNQAERSALEKSGLGN. 3 cysteine pairs are disulfide-bonded: Cys48–Cys70, Cys55–Cys74, and Cys60–Cys81.

In terms of tissue distribution, expressed by the venom duct.

Its subcellular location is the secreted. This is Turripeptide IX-07 from Gemmula speciosa (Splendid gem-turris).